We begin with the raw amino-acid sequence, 250 residues long: 23S rRNA (guanosine-2'-O-)-methyltransferase RlmB (250 aa).

Residues G198, I218, and L227 each contribute to the S-adenosyl-L-methionine site.

The protein belongs to the class IV-like SAM-binding methyltransferase superfamily. RNA methyltransferase TrmH family. RlmB subfamily.

It is found in the cytoplasm. It catalyses the reaction guanosine(2251) in 23S rRNA + S-adenosyl-L-methionine = 2'-O-methylguanosine(2251) in 23S rRNA + S-adenosyl-L-homocysteine + H(+). Its function is as follows. Specifically methylates the ribose of guanosine 2251 in 23S rRNA. This chain is 23S rRNA (guanosine-2'-O-)-methyltransferase RlmB, found in Coxiella burnetii (strain RSA 493 / Nine Mile phase I).